Reading from the N-terminus, the 471-residue chain is Alpha-galactosidase 6 (471 aa).

Residues 1–18 form the signal peptide; it reads MFAFYFLTACISLKGVFG. The cysteines at positions 42 and 74 are disulfide-linked. D72 and D73 together coordinate substrate. The N-linked (GlcNAc...) asparagine glycan is linked to N105. An intrachain disulfide couples C121 to C151. Residue K147 participates in substrate binding. The Nucleophile role is filled by D149. N-linked (GlcNAc...) asparagine glycosylation is present at N175. R205 contacts substrate. The active-site Proton donor is D209. Disulfide bonds link C221–C237 and C223–C230. Q251 serves as a coordination point for substrate. N270, N370, N403, N422, N435, and N454 each carry an N-linked (GlcNAc...) asparagine glycan.

It belongs to the glycosyl hydrolase 27 family. In terms of assembly, homotetramer.

It is found in the secreted. It catalyses the reaction Hydrolysis of terminal, non-reducing alpha-D-galactose residues in alpha-D-galactosides, including galactose oligosaccharides, galactomannans and galactolipids.. The chain is Alpha-galactosidase 6 (MEL6) from Saccharomyces cerevisiae (Baker's yeast).